The following is a 101-amino-acid chain: Glutaredoxin-1 (101 aa).

The Glutaredoxin domain maps to 5–101 (KDRVEKLIQT…GSLSKMIAAL (97 aa)). Cys-25 and Cys-28 are oxidised to a cystine.

The protein belongs to the glutaredoxin family.

It localises to the cytoplasm. The protein resides in the cytosol. Multifunctional enzyme with glutathione-dependent oxidoreductase, glutathione peroxidase and glutathione S-transferase (GST) activity. The disulfide bond functions as an electron carrier in the glutathione-dependent synthesis of deoxyribonucleotides by the enzyme ribonucleotide reductase. In addition, it is also involved in reducing cytosolic protein- and non-protein-disulfides in a coupled system with glutathione reductase. May play a role in protection against oxidative stress caused by superoxide in vivo by regulating the redox state of the protein sulfhydryl groups. The chain is Glutaredoxin-1 from Rhizophagus irregularis (strain DAOM 181602 / DAOM 197198 / MUCL 43194) (Arbuscular mycorrhizal fungus).